The primary structure comprises 641 residues: Uromodulin (641 aa).

A signal peptide spans 1 to 24 (MGQPPLTWMLMVVVASWFITTAAT). Asn-25 is a glycosylation site (N-linked (GlcNAc...) asparagine). In terms of domain architecture, EGF-like 1 spans 28-64 (EARWCSECHSNATCTEDEAVTTCTCQEGFTGDGLTCV). Disulfide bonds link Cys-32–Cys-41, Cys-35–Cys-50, Cys-52–Cys-63, Cys-69–Cys-83, Cys-77–Cys-92, Cys-94–Cys-106, Cys-112–Cys-126, Cys-120–Cys-135, Cys-137–Cys-148, Cys-150–Cys-161, Cys-155–Cys-170, Cys-174–Cys-267, Cys-195–Cys-282, Cys-217–Cys-255, Cys-223–Cys-287, Cys-248–Cys-256, Cys-297–Cys-306, Cys-300–Cys-315, Cys-317–Cys-347, Cys-335–Cys-425, and Cys-366–Cys-389. An EGF-like 2; calcium-binding domain is found at 65 to 107 (DLDECAIPGAHNCSANSSCVNTPGSFSCVCPEGFRLSPGLGCT). N-linked (GlcNAc...) asparagine glycosylation is present at Asn-76. Residues 108–149 (DVDECAEPGLSHCHALATCVNVVGNYLCVCPAGYRGDGWHCE) form the EGF-like 3; calcium-binding domain. Residues 150–171 (CSPGSCGPGLDCVPEGDALVCA) are beta hairpin. Residues 172 to 291 (DPCQAHRTLD…CHLAYCTDPS (120 aa)) form a D10C region. Residue Asn-232 is glycosylated (N-linked (GlcNAc...) asparagine). Asn-275 carries N-linked (GlcNAc...) asparagine glycosylation. The region spanning 292-323 (SVEGTCEECSIDEDCKSDNGRWHCQCKQDFNI) is the EGF-like 4 domain. Asn-322 carries N-linked (GlcNAc...) asparagine glycosylation. Positions 334 to 429 (ECGANDMKVS…KINFACSYPL (96 aa)) are ZP-N. The ZP domain maps to 334 to 589 (ECGANDMKVS…PTCSGTRFRS (256 aa)). The segment at 430–453 (DMKVSLKTSLQPVVSALNITVGGT) is flexible ZP-N/ZP-C linker; important for secretion and polymerization into filaments. Asn-447 is a glycosylation site (N-linked (GlcNAc...) asparagine). An internal hydrophobic patch (IHP) region spans residues 454–464 (GMFTVRMALFQ). The segment at 454–589 (GMFTVRMALF…PTCSGTRFRS (136 aa)) is ZP-C. Intrachain disulfides connect Cys-506–Cys-566, Cys-527–Cys-582, and Cys-571–Cys-578. The tract at residues 586–589 (RFRS) is essential for cleavage by HPN. An external hydrophobic patch (EHP); regulates polymerization into filaments region spans residues 598–606 (VLNLGPITR). Ser-614 is lipidated: GPI-anchor amidated serine. Residues 615-641 (RAAFSSLGLLKVWLPLLLSATLTLTFQ) constitute a propeptide, removed in mature form.

In terms of assembly, homodimer that then polymerizes into long filaments. The filaments can additionally assemble laterally to form a sheet. The filaments consist of a zigzag-shaped backbone with laterally protruding arms which interact with bacterial adhesin fimH. Two fimH molecules can bind to a single UMOD monomer. Post-translationally, N-glycosylated. Proteolytically cleaved at a conserved C-terminal proteolytic cleavage site to generate the secreted form found in urine. This cleavage is catalyzed by HPN.

It is found in the apical cell membrane. It localises to the basolateral cell membrane. Its subcellular location is the cell projection. The protein resides in the cilium membrane. The protein localises to the secreted. Its function is as follows. Functions in biogenesis and organization of the apical membrane of epithelial cells of the thick ascending limb of Henle's loop (TALH), where it promotes formation of complex filamentous gel-like structure that may play a role in the water barrier permeability. May serve as a receptor for binding and endocytosis of cytokines (IL-1, IL-2) and TNF. Facilitates neutrophil migration across renal epithelia. In the urine, may contribute to colloid osmotic pressure, retards passage of positively charged electrolytes, and inhibits formation of liquid containing supersaturated salts and subsequent formation of salt crystals. Protects against urinary tract infections by binding to type 1 fimbriated E.coli. Binds to bacterial adhesin fimH which mediates the stable formation of bacterial aggregates, prevents the binding of E.coli to uroplakins UPK1A and UPK1B which act as urothelial receptors for type I fimbriae, and allows for pathogen clearance through micturation. Also promotes aggregation of other bacteria including K.pneumoniae, P.aeruginosa and S.mitis and so may also protect against other uropathogens. The protein is Uromodulin (UMOD) of Pongo abelii (Sumatran orangutan).